A 555-amino-acid polypeptide reads, in one-letter code: Neurofilament light polypeptide (555 aa).

Ser-2 is modified (N-acetylserine). The head stretch occupies residues 2–93 (SSFSYEPYYS…KSIRTQEKAQ (92 aa)). At Arg-23 the chain carries Asymmetric dimethylarginine; alternate. At Arg-23 the chain carries Omega-N-methylarginine; alternate. Residue Arg-30 is modified to Omega-N-methylarginine. Tyr-43 carries the post-translational modification Phosphotyrosine. Residues Ser-56, Ser-67, and Ser-103 each carry the phosphoserine modification. Residues 90–401 (EKAQLQDLND…KLLEGEETRL (312 aa)) enclose the IF rod domain. The interval 94 to 125 (LQDLNDRFASFIERVHELEQQNKVLEAELLVL) is coil 1A. Positions 126–138 (RQKHSEPSRFRAL) are linker 1. The segment at 139–234 (YEQEIRDLRL…KVHEEEIAEL (96 aa)) is coil 1B. The segment at 235 to 253 (QAQIQYAQISVEMDVSSKP) is linker 12. The tract at residues 254-272 (DLSAALKDIRAQYEKLAAK) is coil 2A. The tract at residues 273-281 (NMQNAEEWF) is linker 2. The tract at residues 282–397 (KSRFTVLTES…AAYRKLLEGE (116 aa)) is coil 2B. Residues 398-444 (ETRLSFTSVGSLTTGYTQSSQVFGRSAYGGLQTSSYLMSARSFPSYY) form a tail, subdomain A region. The segment at 398–555 (ETRLSFTSVG…GEEQATKKKD (158 aa)) is tail. The tail, subdomain B (acidic) stretch occupies residues 445–555 (TSHVQEEQIE…GEEQATKKKD (111 aa)). The tract at residues 463 to 555 (KAEEAKDEPP…GEEQATKKKD (93 aa)) is disordered. A compositionally biased stretch (acidic residues) spans 472 to 540 (PSEGEAEEEE…ETKEAEEEEK (69 aa)). A Phosphoserine modification is found at Ser-473. Thr-532 is subject to Phosphothreonine. A compositionally biased stretch (basic and acidic residues) spans 541–555 (KDEGAGEEQATKKKD).

The protein belongs to the intermediate filament family. Forms homodimers (in vitro). Forms heterodimers with NEFH or NEFM; which can further hetero-oligomerize (in vitro). Forms heterodimers with INA (in vitro). Interacts with ARHGEF28. Interacts with TRIM2. In terms of processing, O-glycosylated. Phosphorylated in the head and rod regions by the PKC kinase PKN1, leading to the inhibition of polymerization. Post-translationally, ubiquitinated in the presence of TRIM2 and UBE2D1.

Its subcellular location is the cell projection. It is found in the axon. The protein localises to the cytoplasm. It localises to the cytoskeleton. Its function is as follows. Neurofilaments usually contain three intermediate filament proteins: NEFL, NEFM, and NEFH which are involved in the maintenance of neuronal caliber. May additionally cooperate with the neuronal intermediate filament proteins PRPH and INA to form neuronal filamentous networks. The chain is Neurofilament light polypeptide (NEFL) from Bos taurus (Bovine).